A 466-amino-acid chain; its full sequence is RuvB-like helicase 2 (466 aa).

74–81 (GPPSTGKT) contacts ATP.

It belongs to the RuvB family. May form heterododecamers with RVB1. Component of the SWR1 chromatin remodeling complex, the INO80 chromatin remodeling complex, and of the R2TP complex.

The protein localises to the nucleus. The catalysed reaction is ATP + H2O = ADP + phosphate + H(+). DNA helicase which participates in several chromatin remodeling complexes, including the SWR1 and the INO80 complexes. The SWR1 complex mediates the ATP-dependent exchange of histone H2A for the H2A variant HZT1 leading to transcriptional regulation of selected genes by chromatin remodeling. The INO80 complex remodels chromatin by shifting nucleosomes and is involved in DNA repair. Also involved in pre-rRNA processing. The protein is RuvB-like helicase 2 (RVB2) of Yarrowia lipolytica (strain CLIB 122 / E 150) (Yeast).